A 546-amino-acid polypeptide reads, in one-letter code: Chaperonin GroEL 2 (546 aa).

ATP-binding positions include 30 to 33, K51, 87 to 91, G415, 479 to 481, and D495; these read TLGP, DGTTT, and NAA.

It belongs to the chaperonin (HSP60) family. As to quaternary structure, forms a cylinder of 14 subunits composed of two heptameric rings stacked back-to-back. Interacts with the co-chaperonin GroES.

The protein resides in the cytoplasm. The catalysed reaction is ATP + H2O + a folded polypeptide = ADP + phosphate + an unfolded polypeptide.. In terms of biological role, together with its co-chaperonin GroES, plays an essential role in assisting protein folding. The GroEL-GroES system forms a nano-cage that allows encapsulation of the non-native substrate proteins and provides a physical environment optimized to promote and accelerate protein folding. This chain is Chaperonin GroEL 2, found in Chromobacterium violaceum (strain ATCC 12472 / DSM 30191 / JCM 1249 / CCUG 213 / NBRC 12614 / NCIMB 9131 / NCTC 9757 / MK).